We begin with the raw amino-acid sequence, 438 residues long: ATP phosphoribosyltransferase regulatory subunit (438 aa).

It belongs to the class-II aminoacyl-tRNA synthetase family. HisZ subfamily. As to quaternary structure, heteromultimer composed of HisG and HisZ subunits.

It localises to the cytoplasm. The protein operates within amino-acid biosynthesis; L-histidine biosynthesis; L-histidine from 5-phospho-alpha-D-ribose 1-diphosphate: step 1/9. Its function is as follows. Required for the first step of histidine biosynthesis. May allow the feedback regulation of ATP phosphoribosyltransferase activity by histidine. This Geobacter sulfurreducens (strain ATCC 51573 / DSM 12127 / PCA) protein is ATP phosphoribosyltransferase regulatory subunit.